The sequence spans 254 residues: 5-oxoprolinase subunit A (254 aa).

This sequence belongs to the LamB/PxpA family. In terms of assembly, forms a complex composed of PxpA, PxpB and PxpC.

It catalyses the reaction 5-oxo-L-proline + ATP + 2 H2O = L-glutamate + ADP + phosphate + H(+). Catalyzes the cleavage of 5-oxoproline to form L-glutamate coupled to the hydrolysis of ATP to ADP and inorganic phosphate. In Burkholderia ambifaria (strain MC40-6), this protein is 5-oxoprolinase subunit A.